We begin with the raw amino-acid sequence, 59 residues long: Protein translocase subunit SecE (59 aa).

The helical transmembrane segment at 30–50 threads the bilayer; the sequence is ITVITTVIFFAIFFALIDSGI.

This sequence belongs to the SecE/SEC61-gamma family. Component of the Sec protein translocase complex. Heterotrimer consisting of SecY, SecE and SecG subunits. The heterotrimers can form oligomers, although 1 heterotrimer is thought to be able to translocate proteins. Interacts with the ribosome. Interacts with SecDF, and other proteins may be involved. Interacts with SecA.

The protein resides in the cell membrane. Essential subunit of the Sec protein translocation channel SecYEG. Clamps together the 2 halves of SecY. May contact the channel plug during translocation. The protein is Protein translocase subunit SecE of Bacillus licheniformis.